The following is a 717-amino-acid chain: MFNKIVKEFQWGNHKVRMETGEIARQASGAVLLDMDDTVVLATVVGAKNAKPGQDFFPLTVDYIEKTYAAGKIPGGFFKREGRPSENETLTSRLIDRPLRPLFPEGFYNEVQVVIHVLSINPEVPADIPALVAASAALAVSGLPFNGPVGAARVGYKDGQYLLNPNRAQLAHSDLDLVVAGTERAVLMVESEANQLSEEVMLGAVVYGHEQMQIAINAIHDLVRDGGKPEWDWQAAPKNEALVAKVSELGLADLQAAYQLRQKSARSQKLKEVYASVAAKLAEAGVEADGVEVDNILFELESKIVRGQILNGEPRIDGRDTRTVRPIEIRSSVLPRAHGSALFTRGETQALVVATLGTKSDEQIIDALQGEYRDRFMLHYNMPPFATGETGRVGSPKRREIGHGRLAKRALIPVLPKEDEFAYTIRLVSEITESNGSSSMASVCGGCLALMDAGVPVKAHVAGVAMGLILEGNKFAVLTDILGDEDHLGDMDFKVAGTDNGITALQMDIKVQGITKEIMQVALAQAKEGRLHILGKMQAAMGHARTELSEHAPRMITVKINPEKIRDVIGKGGSTIQALTKETGCTIDIQEDGTITIASTSSEGMAEAKRRIEGITAEAEVGKIYSGTVLKLLDFGAIVNILPGKDGLLHISEIANERVNQVSDYVKEGQMVRVKLLSTDEKGRMRLSIKAAKAEEGDVPATAPQAPGAGDATSQQQ.

Asp-486 and Asp-492 together coordinate Mg(2+). The KH domain occupies Pro-553–Ile-612. Positions Gly-622 to Lys-690 constitute an S1 motif domain. The disordered stretch occupies residues Lys-690–Gln-717.

This sequence belongs to the polyribonucleotide nucleotidyltransferase family. Mg(2+) is required as a cofactor.

It is found in the cytoplasm. It catalyses the reaction RNA(n+1) + phosphate = RNA(n) + a ribonucleoside 5'-diphosphate. Functionally, involved in mRNA degradation. Catalyzes the phosphorolysis of single-stranded polyribonucleotides processively in the 3'- to 5'-direction. This chain is Polyribonucleotide nucleotidyltransferase, found in Ralstonia nicotianae (strain ATCC BAA-1114 / GMI1000) (Ralstonia solanacearum).